The primary structure comprises 231 residues: 2-C-methyl-D-erythritol 4-phosphate cytidylyltransferase (231 aa).

The protein belongs to the IspD/TarI cytidylyltransferase family. IspD subfamily.

It catalyses the reaction 2-C-methyl-D-erythritol 4-phosphate + CTP + H(+) = 4-CDP-2-C-methyl-D-erythritol + diphosphate. Its pathway is isoprenoid biosynthesis; isopentenyl diphosphate biosynthesis via DXP pathway; isopentenyl diphosphate from 1-deoxy-D-xylulose 5-phosphate: step 2/6. Functionally, catalyzes the formation of 4-diphosphocytidyl-2-C-methyl-D-erythritol from CTP and 2-C-methyl-D-erythritol 4-phosphate (MEP). The protein is 2-C-methyl-D-erythritol 4-phosphate cytidylyltransferase of Xylella fastidiosa (strain M23).